The chain runs to 455 residues: tRNA modification GTPase MnmE (455 aa).

Arginine 26, glutamate 86, and arginine 125 together coordinate (6S)-5-formyl-5,6,7,8-tetrahydrofolate. The TrmE-type G domain maps to 222 to 376 (GLKTAIIGRP…VEEKINQIFF (155 aa)). Asparagine 232 contributes to the K(+) binding site. GTP contacts are provided by residues 232–237 (NVGKSS), 251–257 (TDIAGTT), and 276–279 (DTAG). Position 236 (serine 236) interacts with Mg(2+). Residues threonine 251, isoleucine 253, and threonine 256 each contribute to the K(+) site. Threonine 257 is a binding site for Mg(2+). (6S)-5-formyl-5,6,7,8-tetrahydrofolate is bound at residue lysine 455.

This sequence belongs to the TRAFAC class TrmE-Era-EngA-EngB-Septin-like GTPase superfamily. TrmE GTPase family. In terms of assembly, homodimer. Heterotetramer of two MnmE and two MnmG subunits. K(+) is required as a cofactor.

The protein localises to the cytoplasm. In terms of biological role, exhibits a very high intrinsic GTPase hydrolysis rate. Involved in the addition of a carboxymethylaminomethyl (cmnm) group at the wobble position (U34) of certain tRNAs, forming tRNA-cmnm(5)s(2)U34. The chain is tRNA modification GTPase MnmE from Lactococcus lactis subsp. cremoris (strain SK11).